A 327-amino-acid polypeptide reads, in one-letter code: Ribosomal RNA large subunit methyltransferase F (327 aa).

Positions 1 to 31 (MTHPVTPKNTTRPTPANKPAASTLHPRNPHQ) are disordered.

This sequence belongs to the methyltransferase superfamily. METTL16/RlmF family.

It localises to the cytoplasm. It catalyses the reaction adenosine(1618) in 23S rRNA + S-adenosyl-L-methionine = N(6)-methyladenosine(1618) in 23S rRNA + S-adenosyl-L-homocysteine + H(+). In terms of biological role, specifically methylates the adenine in position 1618 of 23S rRNA. This is Ribosomal RNA large subunit methyltransferase F from Psychrobacter sp. (strain PRwf-1).